Reading from the N-terminus, the 146-residue chain is 3-hydroxyacyl-[acyl-carrier-protein] dehydratase FabZ (146 aa).

His46 is an active-site residue.

It belongs to the thioester dehydratase family. FabZ subfamily.

It is found in the cytoplasm. It catalyses the reaction a (3R)-hydroxyacyl-[ACP] = a (2E)-enoyl-[ACP] + H2O. Involved in unsaturated fatty acids biosynthesis. Catalyzes the dehydration of short chain beta-hydroxyacyl-ACPs and long chain saturated and unsaturated beta-hydroxyacyl-ACPs. The chain is 3-hydroxyacyl-[acyl-carrier-protein] dehydratase FabZ from Acinetobacter baumannii (strain ATCC 17978 / DSM 105126 / CIP 53.77 / LMG 1025 / NCDC KC755 / 5377).